A 364-amino-acid chain; its full sequence is Aminomethyltransferase (364 aa).

The protein belongs to the GcvT family. The glycine cleavage system is composed of four proteins: P, T, L and H.

The enzyme catalyses N(6)-[(R)-S(8)-aminomethyldihydrolipoyl]-L-lysyl-[protein] + (6S)-5,6,7,8-tetrahydrofolate = N(6)-[(R)-dihydrolipoyl]-L-lysyl-[protein] + (6R)-5,10-methylene-5,6,7,8-tetrahydrofolate + NH4(+). The glycine cleavage system catalyzes the degradation of glycine. This Escherichia coli O127:H6 (strain E2348/69 / EPEC) protein is Aminomethyltransferase.